Reading from the N-terminus, the 424-residue chain is Histidine--tRNA ligase (424 aa).

The protein belongs to the class-II aminoacyl-tRNA synthetase family. In terms of assembly, homodimer.

It is found in the cytoplasm. It carries out the reaction tRNA(His) + L-histidine + ATP = L-histidyl-tRNA(His) + AMP + diphosphate + H(+). The chain is Histidine--tRNA ligase from Shewanella woodyi (strain ATCC 51908 / MS32).